The chain runs to 308 residues: tRNA pseudouridine synthase B (308 aa).

D51 serves as the catalytic Nucleophile.

It belongs to the pseudouridine synthase TruB family. Type 1 subfamily.

The catalysed reaction is uridine(55) in tRNA = pseudouridine(55) in tRNA. Functionally, responsible for synthesis of pseudouridine from uracil-55 in the psi GC loop of transfer RNAs. The chain is tRNA pseudouridine synthase B from Aromatoleum aromaticum (strain DSM 19018 / LMG 30748 / EbN1) (Azoarcus sp. (strain EbN1)).